The sequence spans 692 residues: MNTEIVQKHRVLTKGNPNVTFIKVSIGKRNFLAYIDTGATLCFGKRKISNNWEILKQPKEIIIADKSKHYIREAISNVFLKIENKEFLIPIIYLHDSGLDLIIGNNFLKLYQPFIQRLETIELRWKNLNNPKESQMISTKILTKNEVLKLSFEKIHICLEKYLFFKTIEEQLEEVCSEHPLDETKNKNGLLIEIRLKDPLQEINVTNRIPYTIRDVQEFKEECEDLLKKGLIRESQSPHSAPAFYVENHNEIKRGKRRMVINYKKMNEATIGDSYKLPRKDFILEKIKGSLWFSSLDAKSGYYQLRLHENTKPLTAFSCPPQKHYEWNVLSFGLKQAPSIYQRFMDQSLKGLEHICLAYIDDILIFTKGSKEQHVNDVRIVLQRIKEKGIIISKKKSKLIQQEIEYLGLKIQGNGEIDLSPHTQEKILQFPDELEDRKQIQRFLGCINYIANEGFFKNLALERKHLQKKISVKNPWKWDTIDTKMVQSIKGKIQSLPKLYNASIQDFLIVETDASQHSWSGCLRALPKGKQKIGLDEFGIPTADLCTGSSSASSDNSPAEIDKCHSASKQDTHVASKIKKLENELLLCKYVSGTFTDTETRYPIAELEVLAGVKVLEKWRIDLLQTRFLLRTDSKYFAGFCRYNIKTDYRNGRLIRWQLRLQAYQPYVELIKSENNPFADTLTREWSKPSSS.

Asp-36 serves as the catalytic For protease activity. One can recognise a Reverse transcriptase domain in the interval 227 to 411 (LKKGLIRESQ…QEIEYLGLKI (185 aa)).

This sequence belongs to the caulimoviridae enzymatic polyprotein family.

It catalyses the reaction DNA(n) + a 2'-deoxyribonucleoside 5'-triphosphate = DNA(n+1) + diphosphate. In terms of biological role, encodes for at least two polypeptides: protease (PR) and reverse transcriptase (RT). The protease processes the polyprotein in cis. Reverse transcriptase is multifunctional enzyme that converts the viral RNA genome into dsDNA in viral cytoplasmic capsids. This enzyme displays a DNA polymerase activity that can copy either DNA or RNA templates, and a ribonuclease H (RNase H) activity that cleaves the RNA strand of RNA-DNA heteroduplexes in a partially processive 3'- to 5'-endonucleasic mode. Neo-synthesized pregenomic RNA (pgRNA) are encapsidated, and reverse-transcribed inside the nucleocapsid. Partial (+)DNA is synthesized from the (-)DNA template and generates the relaxed circular DNA (RC-DNA) genome. After budding and infection, the RC-DNA migrates in the nucleus, and is converted into a plasmid-like covalently closed circular DNA (cccDNA). The sequence is that of Enzymatic polyprotein from Soybean chlorotic mottle virus.